The following is a 294-amino-acid chain: NAD kinase (294 aa).

Catalysis depends on D74, which acts as the Proton acceptor. NAD(+)-binding positions include 74–75 (DG), 148–149 (NE), H159, R176, D178, 189–194 (TAYSLS), and Q249.

The protein belongs to the NAD kinase family. A divalent metal cation is required as a cofactor.

It localises to the cytoplasm. It catalyses the reaction NAD(+) + ATP = ADP + NADP(+) + H(+). Its function is as follows. Involved in the regulation of the intracellular balance of NAD and NADP, and is a key enzyme in the biosynthesis of NADP. Catalyzes specifically the phosphorylation on 2'-hydroxyl of the adenosine moiety of NAD to yield NADP. The polypeptide is NAD kinase (Vibrio campbellii (strain ATCC BAA-1116)).